Here is a 57-residue protein sequence, read N- to C-terminus: UPF0434 protein Shal_2504 (57 aa).

It belongs to the UPF0434 family.

In Shewanella halifaxensis (strain HAW-EB4), this protein is UPF0434 protein Shal_2504.